Reading from the N-terminus, the 756-residue chain is Hormone-sensitive lipase (756 aa).

An Involved in the stabilization of the negatively charged intermediate by the formation of the oxyanion hole motif is present at residues 350-352; the sequence is HGG. Ser-424 is a catalytic residue. Disordered regions lie at residues 542–570 and 581–600; these read SVSKTEPMRRSVSEAALTQPEGSLGTDSL and RNSSDTTDTPELSLSAETLG. Residue Ser-552 is modified to Phosphoserine; by PKA. At Ser-554 the chain carries Phosphoserine; by AMPK. Residues 581–596 show a composition bias toward polar residues; sequence RNSSDTTDTPELSLSA. Ser-595 and Ser-649 each carry phosphoserine. Residues Asp-692 and His-722 contribute to the active site.

The protein belongs to the 'GDXG' lipolytic enzyme family. In terms of assembly, monomer and homodimer. Interacts with CAVIN1 in the adipocyte cytoplasm. Interacts with PLIN5. Phosphorylation by AMPK reduces its translocation towards the lipid droplets.

The protein localises to the cell membrane. Its subcellular location is the membrane. The protein resides in the caveola. It localises to the cytoplasm. It is found in the cytosol. The protein localises to the lipid droplet. The catalysed reaction is a diacylglycerol + H2O = a monoacylglycerol + a fatty acid + H(+). It catalyses the reaction a triacylglycerol + H2O = a diacylglycerol + a fatty acid + H(+). The enzyme catalyses a monoacylglycerol + H2O = glycerol + a fatty acid + H(+). It carries out the reaction Hydrolyzes glycerol monoesters of long-chain fatty acids.. The catalysed reaction is 1,2-di-(9Z-octadecenoyl)-glycerol + (9Z)-octadecenoate + H(+) = 1,2,3-tri-(9Z-octadecenoyl)-glycerol + H2O. It catalyses the reaction 2,3-di-(9Z)-octadecenoyl-sn-glycerol + H2O = 2-(9Z-octadecenoyl)-glycerol + (9Z)-octadecenoate + H(+). The enzyme catalyses cholesteryl (9Z-octadecenoate) + H2O = cholesterol + (9Z)-octadecenoate + H(+). It carries out the reaction 1,2,3-tri-(9Z-octadecenoyl)-glycerol + H2O = di-(9Z)-octadecenoylglycerol + (9Z)-octadecenoate + H(+). The catalysed reaction is all-trans-retinyl hexadecanoate + H2O = all-trans-retinol + hexadecanoate + H(+). It catalyses the reaction 1,2-di-(9Z-octadecenoyl)-glycerol + H2O = (9Z-octadecenoyl)-glycerol + (9Z)-octadecenoate + H(+). The enzyme catalyses 2-(5Z,8Z,11Z,14Z-eicosatetraenoyl)-glycerol + H2O = glycerol + (5Z,8Z,11Z,14Z)-eicosatetraenoate + H(+). It carries out the reaction 1-(9Z-octadecenoyl)-glycerol + H2O = glycerol + (9Z)-octadecenoate + H(+). The catalysed reaction is 2-(9Z-octadecenoyl)-glycerol + H2O = glycerol + (9Z)-octadecenoate + H(+). It catalyses the reaction 1-O-hexadecyl-2-acetyl-sn-glycerol + H2O = 1-O-hexadecyl-sn-glycerol + acetate + H(+). The enzyme catalyses 1,2-di-(9Z-octadecenoyl)-sn-glycerol + H2O = (9Z-octadecenoyl)-glycerol + (9Z)-octadecenoate + H(+). It carries out the reaction 1,3-di-(9Z-octadecenoyl)-glycerol + H2O = 1-(9Z-octadecenoyl)-glycerol + (9Z)-octadecenoate + H(+). The catalysed reaction is 1,2-di-(9Z-octadecenoyl)-glycerol + H2O = 2-(9Z-octadecenoyl)-glycerol + (9Z)-octadecenoate + H(+). Its pathway is glycerolipid metabolism; triacylglycerol degradation. In terms of biological role, lipase with broad substrate specificity, catalyzing the hydrolysis of triacylglycerols (TAGs), diacylglycerols (DAGs), monoacylglycerols (MAGs), cholesteryl esters and retinyl esters. Shows a preferential hydrolysis of DAGs over TAGs and MAGs. Preferentially hydrolyzes fatty acid (FA) esters at the sn-3 position of the glycerol backbone in DAGs and FA esters at the sn-1 and sn-2 positions of the glycerol backbone in TAGs. Catalyzes the hydrolysis of 2-arachidonoylglycerol, an endocannabinoid and of 2-acetyl monoalkylglycerol ether, the penultimate precursor of the pathway for de novo synthesis of platelet-activating factor. In adipose tissue and heart, it primarily hydrolyzes stored triglycerides to free fatty acids, while in steroidogenic tissues, it principally converts cholesteryl esters to free cholesterol for steroid hormone production. The protein is Hormone-sensitive lipase (LIPE) of Bos taurus (Bovine).